Consider the following 1687-residue polypeptide: Vitellogenin-2 (1687 aa).

The signal sequence occupies residues 1-15; that stretch reads MRVLVLALTVALVAG. In terms of domain architecture, Vitellogenin spans 24 to 663; the sequence is FAPGKTYEYK…DAATVLPKNI (640 aa). 6 N-linked (GlcNAc...) asparagine glycosylation sites follow: Asn941, Asn945, Asn954, Asn1004, Asn1019, and Asn1083. A disordered region spans residues 1081–1174; the sequence is LKNSTKASSS…SSSSSKTKWQ (94 aa). The segment covering 1088 to 1127 has biased composition (low complexity); that stretch reads SSSSSGSSRSSRSRSSSSSSSSSSSSSSRSSSSSSRSSSS. A glycan (N-linked (GlcNAc...) asparagine) is linked at Asn1142. Positions 1148-1169 are enriched in low complexity; the sequence is SSSSSSSSSSSSSSSSSSSSSS. 7 N-linked (GlcNAc...) asparagine glycosylation sites follow: Asn1179, Asn1257, Asn1292, Asn1342, Asn1361, Asn1366, and Asn1390. Residues 1417–1593 form the VWFD domain; it reads AECTVVEDTV…SWVLPAKSCR (177 aa). Cystine bridges form between Cys1419–Cys1556 and Cys1442–Cys1592. 2 N-linked (GlcNAc...) asparagine glycosylation sites follow: Asn1577 and Asn1655.

In terms of processing, phosvitin, an egg yolk storage protein, is one of the most highly phosphorylated (10%) proteins in nature. In terms of tissue distribution, produced by the liver, secreted into the blood and then sequestered by receptor mediated endocytosis into growing oocytes, where it is generally cleaved, giving rise to the respective yolk components lipovitellins and phosvitin.

In terms of biological role, precursor of the egg-yolk proteins that are sources of nutrients during early development of oviparous organisms. This Fundulus heteroclitus (Killifish) protein is Vitellogenin-2.